The primary structure comprises 360 residues: Peptide chain release factor 1 (360 aa).

Gln-235 is modified (N5-methylglutamine). Over residues Gln-284–Thr-293 the composition is skewed to basic and acidic residues. The interval Gln-284 to Asp-305 is disordered.

It belongs to the prokaryotic/mitochondrial release factor family. Post-translationally, methylated by PrmC. Methylation increases the termination efficiency of RF1.

It is found in the cytoplasm. Functionally, peptide chain release factor 1 directs the termination of translation in response to the peptide chain termination codons UAG and UAA. This is Peptide chain release factor 1 from Pectobacterium carotovorum subsp. carotovorum (strain PC1).